The sequence spans 329 residues: Beta-ketoacyl-[acyl-carrier-protein] synthase III (329 aa).

Active-site residues include C123 and H256. The ACP-binding stretch occupies residues 257 to 261; that stretch reads QANIR. N286 is an active-site residue.

Belongs to the thiolase-like superfamily. FabH family. In terms of assembly, homodimer.

Its subcellular location is the cytoplasm. It catalyses the reaction malonyl-[ACP] + acetyl-CoA + H(+) = 3-oxobutanoyl-[ACP] + CO2 + CoA. The protein operates within lipid metabolism; fatty acid biosynthesis. Catalyzes the condensation reaction of fatty acid synthesis by the addition to an acyl acceptor of two carbons from malonyl-ACP. Catalyzes the first condensation reaction which initiates fatty acid synthesis and may therefore play a role in governing the total rate of fatty acid production. Possesses both acetoacetyl-ACP synthase and acetyl transacylase activities. Its substrate specificity determines the biosynthesis of branched-chain and/or straight-chain of fatty acids. This Burkholderia mallei (strain NCTC 10247) protein is Beta-ketoacyl-[acyl-carrier-protein] synthase III.